Reading from the N-terminus, the 94-residue chain is Co-chaperonin GroES (94 aa).

The protein belongs to the GroES chaperonin family. As to quaternary structure, heptamer of 7 subunits arranged in a ring. Interacts with the chaperonin GroEL.

It is found in the cytoplasm. Together with the chaperonin GroEL, plays an essential role in assisting protein folding. The GroEL-GroES system forms a nano-cage that allows encapsulation of the non-native substrate proteins and provides a physical environment optimized to promote and accelerate protein folding. GroES binds to the apical surface of the GroEL ring, thereby capping the opening of the GroEL channel. The chain is Co-chaperonin GroES from Listeria monocytogenes serotype 4b (strain CLIP80459).